A 62-amino-acid chain; its full sequence is Large ribosomal subunit protein eL37 (62 aa).

Residues Cys-20, Cys-23, Cys-35, and Cys-38 each contribute to the Zn(2+) site. The segment at 20–38 (CRRCGRHSFNVAKGYCAAC) adopts a C4-type zinc-finger fold.

Belongs to the eukaryotic ribosomal protein eL37 family. Requires Zn(2+) as cofactor.

Its function is as follows. Binds to the 23S rRNA. The protein is Large ribosomal subunit protein eL37 of Desulfurococcus amylolyticus (strain DSM 18924 / JCM 16383 / VKM B-2413 / 1221n) (Desulfurococcus kamchatkensis).